The sequence spans 273 residues: Putative deoxyribonuclease TATDN1 homolog (273 aa).

A divalent metal cation contacts are provided by Glu-91, His-125, His-147, and Asp-195.

This sequence belongs to the metallo-dependent hydrolases superfamily. TatD-type hydrolase family. The cofactor is a divalent metal cation.

The protein resides in the nucleus. In terms of biological role, putative deoxyribonuclease. The chain is Putative deoxyribonuclease TATDN1 homolog from Encephalitozoon cuniculi (strain GB-M1) (Microsporidian parasite).